We begin with the raw amino-acid sequence, 518 residues long: DNA-(apurinic or apyrimidinic site) endonuclease 2 (518 aa).

Mg(2+)-binding residues include Asn-8 and Glu-48. The active site involves Tyr-156. Residues Asp-197, Asn-199, Asp-303, and His-304 each contribute to the Mg(2+) site. The active-site Proton donor/acceptor is Asp-197. The Proton acceptor role is filled by His-304. Over residues 355 to 405 the composition is skewed to polar residues; the sequence is STLQHNNQTRVQTCQNKAQVRSTRPQPSQVGSSRGQKNLKSYFQPSPSCPQ. The tract at residues 355-407 is disordered; it reads STLQHNNQTRVQTCQNKAQVRSTRPQPSQVGSSRGQKNLKSYFQPSPSCPQAS. Lys-371 is covalently cross-linked (Glycyl lysine isopeptide (Lys-Gly) (interchain with G-Cter in ubiquitin)). Residues 390–397 are required for the interaction and colocalization with PCNA in nuclear foci in presence of oxidative-induced DNA damaging agents; sequence QKNLKSYF. Residues Cys-469, His-472, Cys-495, and Cys-509 each coordinate Zn(2+). The GRF-type zinc finger occupies 469–518; the sequence is CGGHREPCVMRTVKKPGPNLGRRFYMCARPRGPPTDPSSRCNFFLWSRPS.

The protein belongs to the DNA repair enzymes AP/ExoA family. In terms of assembly, interacts with PCNA; this interaction is triggered by reactive oxygen species and increased by misincorporation of uracil in nuclear DNA. Mg(2+) serves as cofactor. The cofactor is Mn(2+). Post-translationally, ubiquitinated by the CUL9-RBX1 complex. Ubiquitinated by MKRN3 at Lys-371 leading to proteasomal degradation. In terms of tissue distribution, highly expressed in brain and kidney. Weakly expressed in the fetal brain.

The protein resides in the nucleus. It is found in the cytoplasm. Its subcellular location is the mitochondrion. It catalyses the reaction Exonucleolytic cleavage in the 3'- to 5'-direction to yield nucleoside 5'-phosphates.. 3'-5' exonuclease activity is activated by sodium and manganese. 3'-5' exonuclease and 3'-phosphodiesterase activities are stimulated in presence of PCNA. In terms of biological role, functions as a weak apurinic/apyrimidinic (AP) endodeoxyribonuclease in the DNA base excision repair (BER) pathway of DNA lesions induced by oxidative and alkylating agents. Initiates repair of AP sites in DNA by catalyzing hydrolytic incision of the phosphodiester backbone immediately adjacent to the damage, generating a single-strand break with 5'-deoxyribose phosphate and 3'-hydroxyl ends. Also displays double-stranded DNA 3'-5' exonuclease, 3'-phosphodiesterase activities. Shows robust 3'-5' exonuclease activity on 3'-recessed heteroduplex DNA and is able to remove mismatched nucleotides preferentially. Also exhibits 3'-5' exonuclease activity on a single nucleotide gap containing heteroduplex DNA and on blunt-ended substrates. Shows fairly strong 3'-phosphodiesterase activity involved in the removal of 3'-damaged termini formed in DNA by oxidative agents. In the nucleus functions in the PCNA-dependent BER pathway. Plays a role in reversing blocked 3' DNA ends, problematic lesions that preclude DNA synthesis. Required for somatic hypermutation (SHM) and DNA cleavage step of class switch recombination (CSR) of immunoglobulin genes. Required for proper cell cycle progression during proliferation of peripheral lymphocytes. This Homo sapiens (Human) protein is DNA-(apurinic or apyrimidinic site) endonuclease 2 (APEX2).